We begin with the raw amino-acid sequence, 493 residues long: Ketol-acid reductoisomerase (NADP(+)) (493 aa).

The KARI N-terminal Rossmann domain occupies 15-208 (AQLGKCRFMQ…GGDRAGVLES (194 aa)). Residues 45-48 (CGAQ), Arg-68, Arg-76, Ser-78, and 108-110 (DKQ) each bind NADP(+). Residue His-132 is part of the active site. Gly-158 contributes to the NADP(+) binding site. 2 consecutive KARI C-terminal knotted domains span residues 209–344 (SFVA…NALA) and 345–486 (FAGK…MKDM). Asp-217, Glu-221, Glu-389, and Glu-393 together coordinate Mg(2+). Ser-414 is a substrate binding site.

It belongs to the ketol-acid reductoisomerase family. Requires Mg(2+) as cofactor.

It carries out the reaction (2R)-2,3-dihydroxy-3-methylbutanoate + NADP(+) = (2S)-2-acetolactate + NADPH + H(+). The enzyme catalyses (2R,3R)-2,3-dihydroxy-3-methylpentanoate + NADP(+) = (S)-2-ethyl-2-hydroxy-3-oxobutanoate + NADPH + H(+). Its pathway is amino-acid biosynthesis; L-isoleucine biosynthesis; L-isoleucine from 2-oxobutanoate: step 2/4. It functions in the pathway amino-acid biosynthesis; L-valine biosynthesis; L-valine from pyruvate: step 2/4. Involved in the biosynthesis of branched-chain amino acids (BCAA). Catalyzes an alkyl-migration followed by a ketol-acid reduction of (S)-2-acetolactate (S2AL) to yield (R)-2,3-dihydroxy-isovalerate. In the isomerase reaction, S2AL is rearranged via a Mg-dependent methyl migration to produce 3-hydroxy-3-methyl-2-ketobutyrate (HMKB). In the reductase reaction, this 2-ketoacid undergoes a metal-dependent reduction by NADPH to yield (R)-2,3-dihydroxy-isovalerate. This is Ketol-acid reductoisomerase (NADP(+)) from Aeromonas salmonicida (strain A449).